The sequence spans 496 residues: Hexokinase-2 (496 aa).

A helical transmembrane segment spans residues 4 to 24; it reads ATVGAVVVGTAAAVAVAALIM. The Hexokinase domain occupies 35 to 487; that stretch reads ARARAILKEF…SGIGAALLAA (453 aa). Residues 90–228 are hexokinase small subdomain; sequence TGDEGGVFYA…EIDMRVSALV (139 aa). ADP contacts are provided by Gly104, Thr105, and Asn106. Residues Thr194, Lys195, Asn229, and Asp230 each coordinate D-glucose. Residues 229–476 form a hexokinase large subdomain region; sequence NDTVGTLAGG…TSIVFKHAND (248 aa). Residue Thr253 coordinates ADP. Asn256, Glu284, and Glu315 together coordinate D-glucose. Gly441 is a binding site for ADP.

This sequence belongs to the hexokinase family.

It localises to the plastid. Its subcellular location is the chloroplast outer membrane. It carries out the reaction a D-hexose + ATP = a D-hexose 6-phosphate + ADP + H(+). The catalysed reaction is D-fructose + ATP = D-fructose 6-phosphate + ADP + H(+). It catalyses the reaction D-glucose + ATP = D-glucose 6-phosphate + ADP + H(+). It functions in the pathway carbohydrate metabolism; hexose metabolism. Its pathway is carbohydrate degradation; glycolysis; D-glyceraldehyde 3-phosphate and glycerone phosphate from D-glucose: step 1/4. Fructose and glucose phosphorylating enzyme. May be involved in the phosphorylation of glucose during the export from plastids to cytosol. Seems neither to be involved in cell sugar sensing nor in carbohydrate metabolism in tuber. This Solanum tuberosum (Potato) protein is Hexokinase-2 (HXK2).